The sequence spans 167 residues: Intermembrane phospholipid transport system binding protein MlaD (167 aa).

Residues 1–6 (MRQTIK) are Cytoplasmic-facing. Residues 7–27 (YEFWVGLFLLLGIGALVFLGL) form a helical; Signal-anchor for type II membrane protein membrane-spanning segment. Residues 28-167 (RVANVQGFAE…GNEKSESTEQ (140 aa)) are Periplasmic-facing. Positions 40–118 (SYTVTATFDN…GEQYIALTMG (79 aa)) are MCE/MlaD.

The protein belongs to the MlaD family. In terms of assembly, the complex is composed of two ATP-binding proteins (MlaF), two transmembrane proteins (MlaE), two cytoplasmic solute-binding proteins (MlaB) and six periplasmic solute-binding proteins (MlaD).

It is found in the cell inner membrane. Its function is as follows. Part of the ABC transporter complex MlaFEDB, which is involved in a phospholipid transport pathway that maintains lipid asymmetry in the outer membrane by retrograde trafficking of phospholipids from the outer membrane to the inner membrane. MlaD functions in substrate binding with strong affinity for phospholipids and modulates ATP hydrolytic activity of the complex. The sequence is that of Intermembrane phospholipid transport system binding protein MlaD from Haemophilus influenzae (strain ATCC 51907 / DSM 11121 / KW20 / Rd).